The following is a 194-amino-acid chain: Probable RNA 2'-phosphotransferase (194 aa).

Belongs to the KptA/TPT1 family.

Its function is as follows. Removes the 2'-phosphate from RNA via an intermediate in which the phosphate is ADP-ribosylated by NAD followed by a presumed transesterification to release the RNA and generate ADP-ribose 1''-2''-cyclic phosphate (APPR&gt;P). May function as an ADP-ribosylase. The polypeptide is Probable RNA 2'-phosphotransferase (Escherichia coli O45:K1 (strain S88 / ExPEC)).